A 353-amino-acid polypeptide reads, in one-letter code: Phospho-N-acetylmuramoyl-pentapeptide-transferase (353 aa).

A run of 10 helical transmembrane segments spans residues 22 to 42 (FAFF…ITWA), 65 to 85 (TPTM…LFCI), 88 to 108 (DNIF…IGLI), 129 to 149 (LLAQ…SSEL), 161 to 181 (PLFD…ISSS), 192 to 212 (GLAT…LYLS), 228 to 248 (GLGE…GFLW), 256 to 276 (VFMG…LAII), 281 to 301 (ILLL…ILQV), and 330 to 350 (KIIV…LASI).

Belongs to the glycosyltransferase 4 family. MraY subfamily. Mg(2+) is required as a cofactor.

Its subcellular location is the cell inner membrane. It catalyses the reaction UDP-N-acetyl-alpha-D-muramoyl-L-alanyl-gamma-D-glutamyl-meso-2,6-diaminopimeloyl-D-alanyl-D-alanine + di-trans,octa-cis-undecaprenyl phosphate = di-trans,octa-cis-undecaprenyl diphospho-N-acetyl-alpha-D-muramoyl-L-alanyl-D-glutamyl-meso-2,6-diaminopimeloyl-D-alanyl-D-alanine + UMP. Its pathway is cell wall biogenesis; peptidoglycan biosynthesis. In terms of biological role, catalyzes the initial step of the lipid cycle reactions in the biosynthesis of the cell wall peptidoglycan: transfers peptidoglycan precursor phospho-MurNAc-pentapeptide from UDP-MurNAc-pentapeptide onto the lipid carrier undecaprenyl phosphate, yielding undecaprenyl-pyrophosphoryl-MurNAc-pentapeptide, known as lipid I. This is Phospho-N-acetylmuramoyl-pentapeptide-transferase from Campylobacter jejuni (strain RM1221).